A 444-amino-acid polypeptide reads, in one-letter code: UDP-N-acetylmuramate--L-alanine ligase (444 aa).

An ATP-binding site is contributed by 110-116; that stretch reads GAHGKTS.

The protein belongs to the MurCDEF family.

It localises to the cytoplasm. It carries out the reaction UDP-N-acetyl-alpha-D-muramate + L-alanine + ATP = UDP-N-acetyl-alpha-D-muramoyl-L-alanine + ADP + phosphate + H(+). Its pathway is cell wall biogenesis; peptidoglycan biosynthesis. Functionally, cell wall formation. The protein is UDP-N-acetylmuramate--L-alanine ligase of Streptococcus pneumoniae (strain CGSP14).